We begin with the raw amino-acid sequence, 262 residues long: Oxidoreductase GME11367 (262 aa).

It belongs to the avfA family.

The protein operates within secondary metabolite biosynthesis. In terms of biological role, oxidoreductase; part of the gene cluster that mediates the biosynthesis of dibenzodioxocinones such as pestalotiollide B, a novel class of inhibitors against cholesterol ester transfer protein (CEPT). The biosynthesis initiates from condensation of acetate and malonate units catalyzed by the non-reducing PKS pks8/GME11356. Pks8/GME11356 lacks a thioesterase (TE) domain, which is important to the cyclizing of the third ring of atrochrysone carboxylic acid, and the esterase GME11355 might play the role of TE and catalyzes the cyclization reaction of the C ring. The lactamase-like protein GME11357 (or other beta-lactamases in Pestalotiopsis microspora) probably hydrolyzes the thioester bond between the ACP of pks8/GME11356 and the intermediate to release atrochrysone carboxylic acid, which is spontaneously dehydrates to form endocrocin anthrone. Endocrocin anthrone is further converted to emodin via the endocrocin intermediate. Emodin is then oxidized by several enzymes such as the Baeyer-Villiger oxidase GME11358, the oxidoreductase GME11367, the short chain dehydrogenase/reductase GME11373, as well as by other oxidoreductases from the cluster, to modify the A and C rings and open the B ring, and finally yield monodictyphenone. The prenyltransferase GME11375 may catalyze the addition reaction between the C5 side chains and the carbon bone of dibenzodioxocinones. The remaining biochemical reactions to the final product dibenzodioxocinones should be methylation catalyzed by methyltransferase GME11366 and reduction and lactonization reaction catalyzed by a series of oxidordeuctases. This chain is Oxidoreductase GME11367, found in Pestalotiopsis microspora.